The following is a 94-amino-acid chain: MRTLTLLTALLLLALHTQAKSPQGTAEEAPDQEQLVMEDQDISISFGGDKGTALQDADVKAGVTCYCRSTRCGFRERLSGACGYRGRIYRLCCR.

The N-terminal stretch at 1–19 (MRTLTLLTALLLLALHTQA) is a signal peptide. Residues 20-62 (KSPQGTAEEAPDQEQLVMEDQDISISFGGDKGTALQDADVKAG) constitute a propeptide that is removed on maturation. Disulfide bonds link C65–C93, C67–C82, and C72–C92.

Belongs to the alpha-defensin family. Highest expression in bone marrow and to a much lesser extent in small intestine.

The protein localises to the secreted. Its function is as follows. Active in vitro against S.aureus, fungi, Gram-positive and Gram-negative bacteria and to a lesser extent against an enveloped virus. In Rattus norvegicus (Rat), this protein is Neutrophil antibiotic peptide NP-2 (Defa).